The primary structure comprises 218 residues: Cytochrome b6 (218 aa).

A helical membrane pass occupies residues 35 to 55; it reads IFYCLGGITLVCFLIQFATGF. Cysteine 38 serves as a coordination point for heme c. Histidine 89 and histidine 103 together coordinate heme b. 3 consecutive transmembrane segments (helical) span residues 93-113, 119-139, and 189-209; these read ASMMVLMLILHVFRVYLTGGF, LTWVTGVTMAVITVSFGVTGY, and LHTFVMPWLLAVFMLMHFLMI. Residues histidine 190 and histidine 205 each coordinate heme b.

Belongs to the cytochrome b family. PetB subfamily. In terms of assembly, the 4 large subunits of the cytochrome b6-f complex are cytochrome b6, subunit IV (17 kDa polypeptide, PetD), cytochrome f and the Rieske protein, while the 4 small subunits are PetG, PetL, PetM and PetN. The complex functions as a dimer. The cofactor is heme b. Heme c serves as cofactor.

Its subcellular location is the cellular thylakoid membrane. Its function is as follows. Component of the cytochrome b6-f complex, which mediates electron transfer between photosystem II (PSII) and photosystem I (PSI), cyclic electron flow around PSI, and state transitions. This Parasynechococcus marenigrum (strain WH8102) protein is Cytochrome b6.